The sequence spans 238 residues: uncharacterized protein (238 aa).

The Response regulatory domain occupies 3 to 116; it reads RVIIVDDEQP…RLAKTLTRLS (114 aa). Position 54 is a 4-aspartylphosphate (D54). Residues 136–237 form the HTH LytTR-type domain; it reads IPCSGHNRIF…LKSLKEKLGI (102 aa).

This is an uncharacterized protein from Yersinia pestis.